The chain runs to 177 residues: Large ribosomal subunit protein uL6 (177 aa).

The protein belongs to the universal ribosomal protein uL6 family. As to quaternary structure, part of the 50S ribosomal subunit.

In terms of biological role, this protein binds to the 23S rRNA, and is important in its secondary structure. It is located near the subunit interface in the base of the L7/L12 stalk, and near the tRNA binding site of the peptidyltransferase center. The sequence is that of Large ribosomal subunit protein uL6 from Shewanella amazonensis (strain ATCC BAA-1098 / SB2B).